We begin with the raw amino-acid sequence, 587 residues long: Arginine--tRNA ligase (587 aa).

Positions 127–137 (PNLAKEMHVGH) match the 'HIGH' region motif.

It belongs to the class-I aminoacyl-tRNA synthetase family. As to quaternary structure, monomer.

It localises to the cytoplasm. The enzyme catalyses tRNA(Arg) + L-arginine + ATP = L-arginyl-tRNA(Arg) + AMP + diphosphate. The protein is Arginine--tRNA ligase of Pseudomonas paraeruginosa (strain DSM 24068 / PA7) (Pseudomonas aeruginosa (strain PA7)).